The following is a 184-amino-acid chain: MSEMEKITIENIVASTSLAEHLDLSKIALALEGSEYEPEQFPGLIYRLQEPKTAVLIFRSGKVNCTGAKNLDDVKKTIDIIIDKLKKADIEVYDNPDIIVQNIVAVYDLESNLNLTDIAMSLGLENVEYEPEQFPGLVYRVEEPKVVLLLFGSGKVVCTGAKEENEIEQAVIKVKKDLQKVGLI.

2 tandem repeats follow at residues 9-85 (IENI…IDKL) and 100-178 (VQNI…KKDL).

The protein belongs to the TBP family.

Its function is as follows. General factor that plays a role in the activation of archaeal genes transcribed by RNA polymerase. Binds specifically to the TATA box promoter element which lies close to the position of transcription initiation. This is TATA-box-binding protein from Picrophilus torridus (strain ATCC 700027 / DSM 9790 / JCM 10055 / NBRC 100828 / KAW 2/3).